The sequence spans 338 residues: Eukaryotic translation initiation factor 3 subunit H (338 aa).

Residues 22–154 (VQCDGLAVMK…LKAYRLTPQA (133 aa)) enclose the MPN domain.

The protein belongs to the eIF-3 subunit H family. In terms of assembly, component of the eukaryotic translation initiation factor 3 (eIF-3) complex. The eIF-3 complex interacts with pix. Interacts with mxt.

The protein resides in the cytoplasm. In terms of biological role, component of the eukaryotic translation initiation factor 3 (eIF-3) complex, which is involved in protein synthesis of a specialized repertoire of mRNAs and, together with other initiation factors, stimulates binding of mRNA and methionyl-tRNAi to the 40S ribosome. The eIF-3 complex specifically targets and initiates translation of a subset of mRNAs involved in cell proliferation. This Drosophila sechellia (Fruit fly) protein is Eukaryotic translation initiation factor 3 subunit H.